Reading from the N-terminus, the 201-residue chain is Holliday junction branch migration complex subunit RuvA (201 aa).

The segment at methionine 1–arginine 63 is domain I. A domain II region spans residues threonine 64–leucine 142. A flexible linker region spans residues phenylalanine 143 to histidine 153. Residues histidine 153–lysine 201 form a domain III region.

This sequence belongs to the RuvA family. Homotetramer. Forms an RuvA(8)-RuvB(12)-Holliday junction (HJ) complex. HJ DNA is sandwiched between 2 RuvA tetramers; dsDNA enters through RuvA and exits via RuvB. An RuvB hexamer assembles on each DNA strand where it exits the tetramer. Each RuvB hexamer is contacted by two RuvA subunits (via domain III) on 2 adjacent RuvB subunits; this complex drives branch migration. In the full resolvosome a probable DNA-RuvA(4)-RuvB(12)-RuvC(2) complex forms which resolves the HJ.

It is found in the cytoplasm. The RuvA-RuvB-RuvC complex processes Holliday junction (HJ) DNA during genetic recombination and DNA repair, while the RuvA-RuvB complex plays an important role in the rescue of blocked DNA replication forks via replication fork reversal (RFR). RuvA specifically binds to HJ cruciform DNA, conferring on it an open structure. The RuvB hexamer acts as an ATP-dependent pump, pulling dsDNA into and through the RuvAB complex. HJ branch migration allows RuvC to scan DNA until it finds its consensus sequence, where it cleaves and resolves the cruciform DNA. The chain is Holliday junction branch migration complex subunit RuvA from Geobacillus sp. (strain WCH70).